A 312-amino-acid chain; its full sequence is 4-diphosphocytidyl-2-C-methyl-D-erythritol kinase (312 aa).

Lys16 is a catalytic residue. 101-111 (PIGAGLAGGSS) is a binding site for ATP. Asp143 is a catalytic residue.

This sequence belongs to the GHMP kinase family. IspE subfamily.

The catalysed reaction is 4-CDP-2-C-methyl-D-erythritol + ATP = 4-CDP-2-C-methyl-D-erythritol 2-phosphate + ADP + H(+). The protein operates within isoprenoid biosynthesis; isopentenyl diphosphate biosynthesis via DXP pathway; isopentenyl diphosphate from 1-deoxy-D-xylulose 5-phosphate: step 3/6. Functionally, catalyzes the phosphorylation of the position 2 hydroxy group of 4-diphosphocytidyl-2C-methyl-D-erythritol. The chain is 4-diphosphocytidyl-2-C-methyl-D-erythritol kinase from Prochlorococcus marinus (strain MIT 9515).